The primary structure comprises 422 residues: Steroid hormone receptor ERR1 (422 aa).

Residues 1–66 (MSSQVVGIEP…EGAGSGEQGS (66 aa)) form a disordered region. The repressor domain stretch occupies residues 1-76 (MSSQVVGIEP…GKLVLSSLPK (76 aa)). Residue Lys-14 forms a Glycyl lysine isopeptide (Lys-Gly) (interchain with G-Cter in SUMO) linkage. Phosphoserine occurs at positions 19 and 22. The segment at residues 76–151 (KRLCLVCGDV…VGMLKEGVRL (76 aa)) is a DNA-binding region (nuclear receptor). 2 NR C4-type zinc fingers span residues 79–99 (CLVC…CEAC) and 115–134 (CPAS…CQAC). An N6-acetyllysine; by PCAF/KAT2B mark is found at Lys-129, Lys-138, Lys-160, and Lys-162. Lys-189 is covalently cross-linked (Glycyl lysine isopeptide (Lys-Gly) (interchain with G-Cter in SUMO2)). An NR LBD domain is found at 192–420 (PVNALVSHLL…KLFLEMLEAM (229 aa)). Residue Lys-402 forms a Glycyl lysine isopeptide (Lys-Gly) (interchain with G-Cter in SUMO); alternate linkage. Lys-402 is covalently cross-linked (Glycyl lysine isopeptide (Lys-Gly) (interchain with G-Cter in SUMO2); alternate). Positions 402 to 422 (KLEGKVPMHKLFLEMLEAMMD) are AF-2 domain.

This sequence belongs to the nuclear hormone receptor family. NR3 subfamily. In terms of assembly, binds DNA as a monomer or a homodimer. Interacts (via the AF2 domain) with coactivator PPARGC1A (via the L3 motif); the interaction greatly enhances transcriptional activity of genes involved in energy metabolism. Interacts with PIAS4; the interaction enhances sumoylation. Interacts with MAPK15; promotes re-localization of ESRRA to the cytoplasm through a XPO1-dependent mechanism then inhibits ESRRA transcriptional activity. Post-translationally, phosphorylation on Ser-19 enhances sumoylation on Lys-14 increasing repression of transcriptional activity. Sumoylated with SUMO2. Main site is Lys-14 which is enhanced by phosphorylation on Ser-19, cofactor activation, and by interaction with PIAS4. Sumoylation enhances repression of transcriptional activity, but has no effect on subcellular location nor on DNA binding. In terms of processing, reversibly acetylated. Acetylation by PCAF/KAT2 at Lys-129, Lys-138, Lys-160 and Lys-162 and PCAF/KAT2 decreases transcriptional activity probably by inhibiting DNA-binding activity; deacetylation involves SIRT1 and HDAC8 and increases DNA-binding. Most highly expressed in kidney, heart, and brown adipocytes. Also found in uterus, cervix and vagina.

The protein localises to the nucleus. Its subcellular location is the cytoplasm. Binds to an ERR-alpha response element (ERRE) containing a single consensus half-site, 5'-TNAAGGTCA-3'. Can bind to the medium-chain acyl coenzyme A dehydrogenase (MCAD) response element NRRE-1 and may act as an important regulator of MCAD promoter. Binds to the C1 region of the lactoferrin gene promoter. Requires dimerization and the coactivator, PGC-1A, for full activity. The ERRalpha/PGC1alpha complex is a regulator of energy metabolism. Induces the expression of PERM1 in the skeletal muscle. The protein is Steroid hormone receptor ERR1 (Esrra) of Mus musculus (Mouse).